The sequence spans 233 residues: Large ribosomal subunit protein uL1 (233 aa).

This sequence belongs to the universal ribosomal protein uL1 family. As to quaternary structure, part of the 50S ribosomal subunit.

Binds directly to 23S rRNA. The L1 stalk is quite mobile in the ribosome, and is involved in E site tRNA release. Functionally, protein L1 is also a translational repressor protein, it controls the translation of the L11 operon by binding to its mRNA. In Buchnera aphidicola subsp. Baizongia pistaciae (strain Bp), this protein is Large ribosomal subunit protein uL1.